The chain runs to 179 residues: MFNGVGWGEVVVLLLIGLFVFGPDRLPKAARDAGRVLRQLRQLANGMRNDLRSELGPEFADLDIRDLHPKTFVRKHLFEDDPVLPPYLTKRTSLDSLLLGDDPPAAPSLTKSSLPRDPAAKDPARPGAEAAVPAAPPGPVSPMLSKVSPSKASAARSVPAQPARSDGPATEVPFDSDAT.

The helical transmembrane segment at 2-22 threads the bilayer; that stretch reads FNGVGWGEVVVLLLIGLFVFG. Residues 98-109 are compositionally biased toward low complexity; that stretch reads LLGDDPPAAPSL. The interval 98 to 179 is disordered; it reads LLGDDPPAAP…TEVPFDSDAT (82 aa).

Belongs to the TatB family. As to quaternary structure, the Tat system comprises two distinct complexes: a TatABC complex, containing multiple copies of TatA, TatB and TatC subunits, and a separate TatA complex, containing only TatA subunits. Substrates initially bind to the TatABC complex, which probably triggers association of the separate TatA complex to form the active translocon.

It is found in the cell membrane. Its function is as follows. Part of the twin-arginine translocation (Tat) system that transports large folded proteins containing a characteristic twin-arginine motif in their signal peptide across membranes. Together with TatC, TatB is part of a receptor directly interacting with Tat signal peptides. TatB may form an oligomeric binding site that transiently accommodates folded Tat precursor proteins before their translocation. This Frankia casuarinae (strain DSM 45818 / CECT 9043 / HFP020203 / CcI3) protein is Sec-independent protein translocase protein TatB.